Here is a 294-residue protein sequence, read N- to C-terminus: Tryptophan 2,3-dioxygenase (294 aa).

Substrate contacts are provided by residues 63 to 67, Tyr125, and Arg129; that span reads FIIQH. Residue His252 coordinates heme. Residue Thr266 participates in substrate binding.

It belongs to the tryptophan 2,3-dioxygenase family. As to quaternary structure, homotetramer. Heme serves as cofactor.

The enzyme catalyses L-tryptophan + O2 = N-formyl-L-kynurenine. It participates in amino-acid degradation; L-tryptophan degradation via kynurenine pathway; L-kynurenine from L-tryptophan: step 1/2. Functionally, heme-dependent dioxygenase that catalyzes the oxidative cleavage of the L-tryptophan (L-Trp) pyrrole ring and converts L-tryptophan to N-formyl-L-kynurenine. Catalyzes the oxidative cleavage of the indole moiety. This Polaromonas sp. (strain JS666 / ATCC BAA-500) protein is Tryptophan 2,3-dioxygenase.